A 262-amino-acid polypeptide reads, in one-letter code: Acyl-[acyl-carrier-protein]--UDP-N-acetylglucosamine O-acyltransferase (262 aa).

It belongs to the transferase hexapeptide repeat family. LpxA subfamily. As to quaternary structure, homotrimer.

Its subcellular location is the cytoplasm. The catalysed reaction is a (3R)-hydroxyacyl-[ACP] + UDP-N-acetyl-alpha-D-glucosamine = a UDP-3-O-[(3R)-3-hydroxyacyl]-N-acetyl-alpha-D-glucosamine + holo-[ACP]. Its pathway is glycolipid biosynthesis; lipid IV(A) biosynthesis; lipid IV(A) from (3R)-3-hydroxytetradecanoyl-[acyl-carrier-protein] and UDP-N-acetyl-alpha-D-glucosamine: step 1/6. In terms of biological role, involved in the biosynthesis of lipid A, a phosphorylated glycolipid that anchors the lipopolysaccharide to the outer membrane of the cell. The sequence is that of Acyl-[acyl-carrier-protein]--UDP-N-acetylglucosamine O-acyltransferase from Blochmanniella floridana.